Here is a 391-residue protein sequence, read N- to C-terminus: Lipid-A-disaccharide synthase (391 aa).

It belongs to the LpxB family.

It carries out the reaction a lipid X + a UDP-2-N,3-O-bis[(3R)-3-hydroxyacyl]-alpha-D-glucosamine = a lipid A disaccharide + UDP + H(+). Its pathway is bacterial outer membrane biogenesis; LPS lipid A biosynthesis. In terms of biological role, condensation of UDP-2,3-diacylglucosamine and 2,3-diacylglucosamine-1-phosphate to form lipid A disaccharide, a precursor of lipid A, a phosphorylated glycolipid that anchors the lipopolysaccharide to the outer membrane of the cell. This Rickettsia akari (strain Hartford) protein is Lipid-A-disaccharide synthase.